The following is a 384-amino-acid chain: Cytochrome b (384 aa).

The next 4 helical transmembrane spans lie at 32 to 52 (VGSL…FLAM), 76 to 98 (WLIR…LHIG), 113 to 133 (LWVI…MGYC), and 179 to 199 (FFAL…MHLM). Heme b contacts are provided by His-82 and His-96. Heme b-binding residues include His-183 and His-197. His-202 contacts a ubiquinone. Transmembrane regions (helical) follow at residues 225–245 (FIFK…LFVF), 289–309 (LGGV…PYTD), 321–341 (LSKF…NLGQ), and 348–368 (YIEL…LIVP).

This sequence belongs to the cytochrome b family. As to quaternary structure, fungal cytochrome b-c1 complex contains 10 subunits; 3 respiratory subunits, 2 core proteins and 5 low-molecular weight proteins. Cytochrome b-c1 complex is a homodimer. The cofactor is heme b.

The protein localises to the mitochondrion inner membrane. Component of the ubiquinol-cytochrome c reductase complex (complex III or cytochrome b-c1 complex) that is part of the mitochondrial respiratory chain. The b-c1 complex mediates electron transfer from ubiquinol to cytochrome c. Contributes to the generation of a proton gradient across the mitochondrial membrane that is then used for ATP synthesis. The chain is Cytochrome b (COB) from Candida parapsilosis (Yeast).